The primary structure comprises 245 residues: 2,3-bisphosphoglycerate-dependent phosphoglycerate mutase (245 aa).

Substrate contacts are provided by residues 8–15 (RHGQSLWN), 21–22 (TG), arginine 60, 87–90 (ERHY), lysine 98, 114–115 (RR), and 183–184 (GN). Histidine 9 acts as the Tele-phosphohistidine intermediate in catalysis. The Proton donor/acceptor role is filled by glutamate 87.

Belongs to the phosphoglycerate mutase family. BPG-dependent PGAM subfamily.

It carries out the reaction (2R)-2-phosphoglycerate = (2R)-3-phosphoglycerate. It participates in carbohydrate degradation; glycolysis; pyruvate from D-glyceraldehyde 3-phosphate: step 3/5. Functionally, catalyzes the interconversion of 2-phosphoglycerate and 3-phosphoglycerate. This Bacillus cereus (strain B4264) protein is 2,3-bisphosphoglycerate-dependent phosphoglycerate mutase.